A 214-amino-acid chain; its full sequence is Pyridoxine/pyridoxamine 5'-phosphate oxidase (214 aa).

Substrate-binding positions include 8-11 (RINY) and lysine 66. Residues 61 to 66 (RIVLIK), 76 to 77 (FT), arginine 82, lysine 83, and glutamine 105 contribute to the FMN site. Residues tyrosine 123, arginine 127, and serine 131 each coordinate substrate. FMN-binding positions include 140–141 (QS) and tryptophan 184. Position 190 to 192 (190 to 192 (RLH)) interacts with substrate. Arginine 194 contributes to the FMN binding site.

The protein belongs to the pyridoxamine 5'-phosphate oxidase family. In terms of assembly, homodimer. FMN serves as cofactor.

It carries out the reaction pyridoxamine 5'-phosphate + O2 + H2O = pyridoxal 5'-phosphate + H2O2 + NH4(+). It catalyses the reaction pyridoxine 5'-phosphate + O2 = pyridoxal 5'-phosphate + H2O2. It functions in the pathway cofactor metabolism; pyridoxal 5'-phosphate salvage; pyridoxal 5'-phosphate from pyridoxamine 5'-phosphate: step 1/1. The protein operates within cofactor metabolism; pyridoxal 5'-phosphate salvage; pyridoxal 5'-phosphate from pyridoxine 5'-phosphate: step 1/1. In terms of biological role, catalyzes the oxidation of either pyridoxine 5'-phosphate (PNP) or pyridoxamine 5'-phosphate (PMP) into pyridoxal 5'-phosphate (PLP). This is Pyridoxine/pyridoxamine 5'-phosphate oxidase from Burkholderia orbicola (strain MC0-3).